We begin with the raw amino-acid sequence, 176 residues long: NAD(P)H-quinone oxidoreductase subunit J (176 aa).

Belongs to the complex I 30 kDa subunit family. NDH-1 can be composed of about 15 different subunits; different subcomplexes with different compositions have been identified which probably have different functions.

The protein localises to the cell inner membrane. The catalysed reaction is a plastoquinone + NADH + (n+1) H(+)(in) = a plastoquinol + NAD(+) + n H(+)(out). It catalyses the reaction a plastoquinone + NADPH + (n+1) H(+)(in) = a plastoquinol + NADP(+) + n H(+)(out). In terms of biological role, NDH-1 shuttles electrons from an unknown electron donor, via FMN and iron-sulfur (Fe-S) centers, to quinones in the respiratory and/or the photosynthetic chain. The immediate electron acceptor for the enzyme in this species is believed to be plastoquinone. Couples the redox reaction to proton translocation, and thus conserves the redox energy in a proton gradient. Cyanobacterial NDH-1 also plays a role in inorganic carbon-concentration. The protein is NAD(P)H-quinone oxidoreductase subunit J of Gloeobacter violaceus (strain ATCC 29082 / PCC 7421).